We begin with the raw amino-acid sequence, 346 residues long: Putative aquaporin-7B (346 aa).

Residues 1-40 (MVQASGHRRSTRGSKMVSWSVIAKIQEIWCEEDERKMVRE) are Cytoplasmic-facing. A helical membrane pass occupies residues 41-58 (FLAEFMSTYVMMVFGLGS). At 59-71 (VAHMVLNKTYGSY) the chain is on the extracellular side. A helical transmembrane segment spans residues 72-89 (LGVNLGFGFGVTMGVHVA). Residues 90 to 93 (GRIS) are Cytoplasmic-facing. Residues 94 to 107 (GAHMNAAVTFTNCA) constitute an intramembrane region (discontinuously helical). The NPA 1 signature appears at 98–100 (NAA). Topologically, residues 108–115 (LGRVPWRK) are cytoplasmic. A helical transmembrane segment spans residues 116-136 (FPVHVLGQFLGSFLAAATIYS). Over 137-174 (LFYTAILHFSGGELMVTGPFATAGIFATYLPDHMTLWR) the chain is Extracellular. A helical transmembrane segment spans residues 175-192 (GFLNEEWLTRMLQLCLFT). Residues 193-204 (ITDQENNPALPG) lie on the Cytoplasmic side of the membrane. Residues 205–221 (THALVISILVVIIRVSH) traverse the membrane as a helical segment. Topologically, residues 222–225 (GINT) are extracellular. Positions 226–239 (GYAINPSRDPPPSI) form an intramembrane region, discontinuously helical. The NPA 2 signature appears at 230 to 232 (NPS). Topologically, residues 240–257 (FTFIAGWGKQVFSDGENW) are extracellular. The chain crosses the membrane as a helical span at residues 258–279 (WWVPVVAPLLGASLGGIIYLVF). The Cytoplasmic portion of the chain corresponds to 280–346 (IGSTIPREPL…LHESMALEHF (67 aa)).

This sequence belongs to the MIP/aquaporin (TC 1.A.8) family. In terms of assembly, homotetramer; each monomer provides an independent glycerol/water pore.

The protein localises to the membrane. The catalysed reaction is glycerol(in) = glycerol(out). It catalyses the reaction H2O(in) = H2O(out). Functionally, aquaglyceroporins form homotetrameric transmembrane channels, with each monomer independently mediating glycerol and water transport across the plasma membrane along their osmotic gradient. The sequence is that of Putative aquaporin-7B from Homo sapiens (Human).